The following is a 249-amino-acid chain: Ubiquinone biosynthesis O-methyltransferase (249 aa).

R41, G72, D93, and M136 together coordinate S-adenosyl-L-methionine.

The protein belongs to the methyltransferase superfamily. UbiG/COQ3 family.

It catalyses the reaction a 3-demethylubiquinol + S-adenosyl-L-methionine = a ubiquinol + S-adenosyl-L-homocysteine + H(+). It carries out the reaction a 3-(all-trans-polyprenyl)benzene-1,2-diol + S-adenosyl-L-methionine = a 2-methoxy-6-(all-trans-polyprenyl)phenol + S-adenosyl-L-homocysteine + H(+). It participates in cofactor biosynthesis; ubiquinone biosynthesis. Its function is as follows. O-methyltransferase that catalyzes the 2 O-methylation steps in the ubiquinone biosynthetic pathway. This chain is Ubiquinone biosynthesis O-methyltransferase, found in Methylobacterium sp. (strain 4-46).